The primary structure comprises 354 residues: Guanine nucleotide-binding protein G(i) subunit alpha-1 (354 aa).

Gly2 carries the N-myristoyl glycine lipid modification. The S-palmitoyl cysteine moiety is linked to residue Cys3. A G-alpha domain is found at 32-354 (REVKLLLLGA…KNNLKDCGLF (323 aa)). The tract at residues 35–48 (KLLLLGAGESGKST) is G1 motif. GTP-binding positions include 43–48 (ESGKST), 150–151 (DS), and 175–178 (LRTR). Residue Ser47 coordinates Mg(2+). The segment at 173–181 (DVLRTRVKT) is G2 motif. Residue Thr181 participates in Mg(2+) binding. The tract at residues 196 to 205 (FKMFDVGGQR) is G3 motif. GTP contacts are provided by residues 200–204 (DVGGQ), 269–272 (NKKD), and Ala326. Residues 265–272 (ILFLNKKD) are G4 motif. The tract at residues 324 to 329 (TCATDT) is G5 motif.

The protein belongs to the G-alpha family. G(i/o/t/z) subfamily. Heterotrimeric G proteins are composed of 3 units; alpha, beta and gamma. The alpha chain contains the guanine nucleotide binding site. Part of a spindle orientation complex. Identified in complex with the beta subunit GNB1 and the gamma subunit GNG1. Identified in complex with the beta subunit GNB1 and the gamma subunit GNG2. GTP binding causes dissociation of the heterotrimer, liberating the individual subunits so that they can interact with downstream effector proteins. In terms of processing, myristoylation at Gly-2 is required for membrane anchoring before palmitoylation. Palmitoylation at Cys-3 varies with membrane lipid composition.

Its subcellular location is the nucleus. The protein localises to the cytoplasm. It is found in the cell membrane. It localises to the cytoskeleton. The protein resides in the microtubule organizing center. Its subcellular location is the centrosome. The protein localises to the cell cortex. It is found in the membrane. It carries out the reaction GTP + H2O = GDP + phosphate + H(+). Guanine nucleotide-binding proteins (G proteins) function as transducers downstream of G protein-coupled receptors (GPCRs) in numerous signaling cascades. The alpha chain contains the guanine nucleotide binding site and alternates between an active, GTP-bound state and an inactive, GDP-bound state. Signaling by an activated GPCR promotes GDP release and GTP binding. The alpha subunit has a low GTPase activity that converts bound GTP to GDP, thereby terminating the signal. Both GDP release and GTP hydrolysis are modulated by numerous regulatory proteins. Signaling is mediated via effector proteins, such as adenylate cyclase. Inhibits adenylate cyclase activity, leading to decreased intracellular cAMP levels. Required for cortical dynein-dynactin complex recruitment during metaphase. This Oryzias latipes (Japanese rice fish) protein is Guanine nucleotide-binding protein G(i) subunit alpha-1 (gnai1).